Here is a 90-residue protein sequence, read N- to C-terminus: Probable Fe(2+)-trafficking protein (90 aa).

The protein belongs to the Fe(2+)-trafficking protein family.

Functionally, could be a mediator in iron transactions between iron acquisition and iron-requiring processes, such as synthesis and/or repair of Fe-S clusters in biosynthetic enzymes. This is Probable Fe(2+)-trafficking protein from Variovorax paradoxus (strain S110).